The following is a 228-amino-acid chain: Probable ribosomal RNA small subunit methyltransferase A (228 aa).

S-adenosyl-L-methionine contacts are provided by His9, Leu11, Gly34, Glu55, Asp78, and Asn93.

The protein belongs to the class I-like SAM-binding methyltransferase superfamily. rRNA adenine N(6)-methyltransferase family. RsmA subfamily.

The protein resides in the cytoplasm. In terms of biological role, specifically dimethylates two adjacent adenosines in the loop of a conserved hairpin near the 3'-end of 16S rRNA in the 30S particle. May play a critical role in biogenesis of 30S subunits. The sequence is that of Probable ribosomal RNA small subunit methyltransferase A from Pyrobaculum aerophilum (strain ATCC 51768 / DSM 7523 / JCM 9630 / CIP 104966 / NBRC 100827 / IM2).